A 340-amino-acid polypeptide reads, in one-letter code: Methionine import ATP-binding protein MetN 1 (340 aa).

One can recognise an ABC transporter domain in the interval Ile2 to Val242. Gly39 to Ser46 lines the ATP pocket.

This sequence belongs to the ABC transporter superfamily. Methionine importer (TC 3.A.1.24) family. As to quaternary structure, the complex is composed of two ATP-binding proteins (MetN), two transmembrane proteins (MetI) and a solute-binding protein (MetQ).

Its subcellular location is the cell inner membrane. The enzyme catalyses L-methionine(out) + ATP + H2O = L-methionine(in) + ADP + phosphate + H(+). It carries out the reaction D-methionine(out) + ATP + H2O = D-methionine(in) + ADP + phosphate + H(+). Functionally, part of the ABC transporter complex MetNIQ involved in methionine import. Responsible for energy coupling to the transport system. The protein is Methionine import ATP-binding protein MetN 1 of Pectobacterium atrosepticum (strain SCRI 1043 / ATCC BAA-672) (Erwinia carotovora subsp. atroseptica).